The primary structure comprises 152 residues: Putative RRN3-like protein RRN3P1 (152 aa).

The protein belongs to the RRN3 family.

This is Putative RRN3-like protein RRN3P1 (RRN3P1) from Homo sapiens (Human).